We begin with the raw amino-acid sequence, 142 residues long: Large ribosomal subunit protein uL16 (142 aa).

It belongs to the universal ribosomal protein uL16 family. As to quaternary structure, part of the 50S ribosomal subunit.

In terms of biological role, binds 23S rRNA and is also seen to make contacts with the A and possibly P site tRNAs. The sequence is that of Large ribosomal subunit protein uL16 from Gemmatimonas aurantiaca (strain DSM 14586 / JCM 11422 / NBRC 100505 / T-27).